Consider the following 345-residue polypeptide: tRNA-specific 2-thiouridylase MnmA (345 aa).

Residues 6–13 (AMSGGVDS) and Leu-32 contribute to the ATP site. Cys-100 functions as the Nucleophile in the catalytic mechanism. An intrachain disulfide couples Cys-100 to Cys-197. Residue Gly-124 coordinates ATP. Residues 146–148 (RDQ) are interaction with tRNA. Cys-197 (cysteine persulfide intermediate) is an active-site residue.

Belongs to the MnmA/TRMU family.

Its subcellular location is the cytoplasm. It carries out the reaction S-sulfanyl-L-cysteinyl-[protein] + uridine(34) in tRNA + AH2 + ATP = 2-thiouridine(34) in tRNA + L-cysteinyl-[protein] + A + AMP + diphosphate + H(+). Catalyzes the 2-thiolation of uridine at the wobble position (U34) of tRNA, leading to the formation of s(2)U34. The protein is tRNA-specific 2-thiouridylase MnmA of Acidiphilium cryptum (strain JF-5).